The sequence spans 194 residues: Orotate phosphoribosyltransferase (194 aa).

Position 114-122 (114-122 (EDVVTTGKS)) interacts with 5-phospho-alpha-D-ribose 1-diphosphate. Residues Thr-118 and Arg-146 each coordinate orotate.

The protein belongs to the purine/pyrimidine phosphoribosyltransferase family. PyrE subfamily. Homodimer. It depends on Mg(2+) as a cofactor.

It carries out the reaction orotidine 5'-phosphate + diphosphate = orotate + 5-phospho-alpha-D-ribose 1-diphosphate. The protein operates within pyrimidine metabolism; UMP biosynthesis via de novo pathway; UMP from orotate: step 1/2. In terms of biological role, catalyzes the transfer of a ribosyl phosphate group from 5-phosphoribose 1-diphosphate to orotate, leading to the formation of orotidine monophosphate (OMP). The polypeptide is Orotate phosphoribosyltransferase (Clostridioides difficile (strain 630) (Peptoclostridium difficile)).